The chain runs to 270 residues: Thiazole synthase (270 aa).

Lysine 112 serves as the catalytic Schiff-base intermediate with DXP. 1-deoxy-D-xylulose 5-phosphate-binding positions include glycine 173, 199–200, and 221–222; these read AG and NS.

Belongs to the ThiG family. Homotetramer. Forms heterodimers with either ThiH or ThiS.

The protein localises to the cytoplasm. It carries out the reaction [ThiS sulfur-carrier protein]-C-terminal-Gly-aminoethanethioate + 2-iminoacetate + 1-deoxy-D-xylulose 5-phosphate = [ThiS sulfur-carrier protein]-C-terminal Gly-Gly + 2-[(2R,5Z)-2-carboxy-4-methylthiazol-5(2H)-ylidene]ethyl phosphate + 2 H2O + H(+). It functions in the pathway cofactor biosynthesis; thiamine diphosphate biosynthesis. Functionally, catalyzes the rearrangement of 1-deoxy-D-xylulose 5-phosphate (DXP) to produce the thiazole phosphate moiety of thiamine. Sulfur is provided by the thiocarboxylate moiety of the carrier protein ThiS. In vitro, sulfur can be provided by H(2)S. The chain is Thiazole synthase from Pseudomonas putida (strain ATCC 700007 / DSM 6899 / JCM 31910 / BCRC 17059 / LMG 24140 / F1).